Consider the following 468-residue polypeptide: Beta-monoglucosyldiacylglycerol synthase (468 aa).

4 consecutive transmembrane segments (helical) span residues A51 to G71, S72 to A92, M358 to M378, and M387 to L407.

This sequence belongs to the glycosyltransferase 2 family. Mg(2+) serves as cofactor.

Its subcellular location is the membrane. The catalysed reaction is a 1,2-diacyl-sn-glycerol + UDP-alpha-D-glucose = a 1,2-diacyl-3-O-(beta-D-glucopyranosyl)-sn-glycerol + UDP + H(+). In terms of biological role, glucosyltransferase involved in the biosynthesis of the non-bilayer-forming membrane lipid beta-monoglucosyldiacylglycerol which contributes to regulate the properties and stability of the membrane. Catalyzes the transfer of a glucosyl residue from UDP-Glc to diacylglycerol (DAG) acceptor to form the corresponding beta-glucosyl-DAG (1,2-diacyl-3-O-(beta-D-glucopyranosyl)-sn-glycerol). It can only use UDP-Glc as sugar donor. Two types of DAG (dipalmitoyl-DAG (DPDAG) and 1-oleoyl-2-palmitoyl-DAG (OPDAG)) can be used as sugar acceptors, but OPDAG is preferred. The protein is Beta-monoglucosyldiacylglycerol synthase of Nostoc sp. (strain PCC 7120 / SAG 25.82 / UTEX 2576).